Reading from the N-terminus, the 678-residue chain is RAS guanyl-releasing protein 4 (678 aa).

Composition is skewed to basic residues over residues 1-10 and 20-32; these read MNRKDIKRKS and GHGR…RHKT. Disordered regions lie at residues 1 to 33 and 165 to 185; these read MNRK…HKTC and GDAS…MSSP. Positions 49–175 constitute an N-terminal Ras-GEF domain; that stretch reads GVLSESSCSV…DASNLLSPGG (127 aa). The Ras-GEF domain occupies 201–432; sequence ETEELAQHLT…YELSYAREPR (232 aa). The EF-hand domain occupies 466–501; the sequence is HVEQLVESVFKNYDPEGHGSISLEDFEKLSANFPFA. Residues 540 to 595 form a Phorbol-ester/DAG-type zinc finger; it reads LHAFQEVTFRKPTFCHSCNGFVSTGPLWGVTKRGYRCQDCGLCCHRHCRDQVRVEC. Disordered regions lie at residues 598-620 and 651-678; these read RPET…LPPT and SSHS…KSSV. Residues 605–619 show a composition bias toward pro residues; that stretch reads PGPPGAPGPATPLPP.

The protein belongs to the RASGRP family. Expressed by mast cells and their progenitors (at protein level).

The protein localises to the cytoplasm. The protein resides in the cell membrane. Functions as a cation- and diacylglycerol (DAG)-regulated nucleotide exchange factor activating Ras through the exchange of bound GDP for GTP. In neutrophils, participates in a phospholipase C-activating N-formyl peptide-activated GPCR (G protein-coupled receptor) signaling pathway by promoting Ras-mediated activation of PIK3CG/PI3Kgamma to promote neutrophil functional responses. In CD117(+) dendritic cells and mast cells, participates in an lipopolysaccharide (LPS)-activated signaling pathway that stimulates the production of interferon-gamma and other pro-inflammatory cytokines by natural killer (NK) cells. May function in mast cell differentiation. Does not appear to be required for the development of B-cells, DC-cells, T-cells, or NK-cells. This chain is RAS guanyl-releasing protein 4 (Rasgrp4), found in Rattus norvegicus (Rat).